Here is a 101-residue protein sequence, read N- to C-terminus: MAKTSMKAREAKRAQLVAKFAEKRAALKVIIASPASSDEDRWDAVLKLQALPRDSSASRQRNRCNQTGRPHGFLRKFGLSRIKLREATMRGEVPGLRKASW.

This sequence belongs to the universal ribosomal protein uS14 family. Part of the 30S ribosomal subunit. Contacts proteins S3 and S10.

Functionally, binds 16S rRNA, required for the assembly of 30S particles and may also be responsible for determining the conformation of the 16S rRNA at the A site. In Shewanella oneidensis (strain ATCC 700550 / JCM 31522 / CIP 106686 / LMG 19005 / NCIMB 14063 / MR-1), this protein is Small ribosomal subunit protein uS14.